The chain runs to 431 residues: 2-oxoisovalerate dehydrogenase subunit alpha, mitochondrial (431 aa).

140–142 (QYR) provides a ligand contact to thiamine diphosphate. K(+)-binding residues include Ser189, Thr194, and Gln195.

It belongs to the BCKDHA family. Requires thiamine diphosphate as cofactor.

The protein localises to the mitochondrion matrix. It carries out the reaction N(6)-[(R)-lipoyl]-L-lysyl-[protein] + 3-methyl-2-oxobutanoate + H(+) = N(6)-[(R)-S(8)-2-methylpropanoyldihydrolipoyl]-L-lysyl-[protein] + CO2. It functions in the pathway lipid metabolism; fatty acid biosynthesis. The branched-chain alpha-keto dehydrogenase complex catalyzes the overall conversion of alpha-keto acids to acyl-CoA and CO(2). It contains multiple copies of three enzymatic components: branched-chain alpha-keto acid decarboxylase (E1), lipoamide acyltransferase (E2) and lipoamide dehydrogenase (E3). Required for the production of the monomethyl branched-chain fatty acids (mmBCFAs) isopentadecanoate (C15iso) and isoheptadecanoate (C17iso). This is 2-oxoisovalerate dehydrogenase subunit alpha, mitochondrial from Caenorhabditis elegans.